Reading from the N-terminus, the 118-residue chain is MESRWGIVVIGLLCCVSWVEAITSSPKIQVYTRSPAENGKHNHLNCYVSSFHPPQITIRLLRNGEEMPNVERSDLSFSNDWTFHRLVHTGFVPNDKDVFECEVTHNSVTKSVKWDRDN.

A signal peptide spans 1-21; that stretch reads MESRWGIVVIGLLCCVSWVEA. The region spanning 26–113 is the Ig-like C1-type domain; that stretch reads PKIQVYTRSP…THNSVTKSVK (88 aa). A disulfide bond links Cys46 and Cys101.

It belongs to the beta-2-microglobulin family. As to quaternary structure, heterodimer of an alpha chain and a beta chain. Beta-2-microglobulin is the beta-chain of major histocompatibility complex class I molecules.

It is found in the secreted. Component of the class I major histocompatibility complex (MHC). Involved in the presentation of peptide antigens to the immune system. In Tachyglossus aculeatus aculeatus (Southeast Australian short-beaked echidna), this protein is Beta-2-microglobulin (B2M).